We begin with the raw amino-acid sequence, 1368 residues long: DNA-directed RNA polymerase subunit beta (1368 aa).

This sequence belongs to the RNA polymerase beta chain family. As to quaternary structure, the RNAP catalytic core consists of 2 alpha, 1 beta, 1 beta' and 1 omega subunit. When a sigma factor is associated with the core the holoenzyme is formed, which can initiate transcription.

The enzyme catalyses RNA(n) + a ribonucleoside 5'-triphosphate = RNA(n+1) + diphosphate. In terms of biological role, DNA-dependent RNA polymerase catalyzes the transcription of DNA into RNA using the four ribonucleoside triphosphates as substrates. This is DNA-directed RNA polymerase subunit beta from Burkholderia multivorans (strain ATCC 17616 / 249).